A 1946-amino-acid polypeptide reads, in one-letter code: Sickle tail protein (1946 aa).

2 disordered regions span residues 1–83 and 113–176; these read MEES…GMQP and ERLR…VRSA. Polar residues predominate over residues 18–36; it reads DSRQMPQQGRSNLHVTSQE. Over residues 38 to 47 the composition is skewed to basic and acidic residues; that stretch reads AACRRPRERL. At S169 the chain carries Phosphoserine. At Y244 the chain carries Phosphotyrosine. 2 disordered regions span residues 305 to 324 and 339 to 374; these read HPPH…HSLP and AIPG…RDVK. Over residues 308–324 the composition is skewed to pro residues; that stretch reads HVIPNSPPSTPVPHSLP. Over residues 352 to 367 the composition is skewed to low complexity; that stretch reads SSLPVSRSISPSPSAI. S357 carries an O-linked (GlcNAc) serine glycan. Phosphoserine occurs at positions 361 and 365. Y393 carries the post-translational modification Phosphotyrosine. Residues 455-512 are disordered; sequence SRKYPDSHLPTLGSKTPPASPHRVGDLRMIDLHPHLNTHGPPHTLQPDRASPSRQSFK. Position 470 is a phosphothreonine (T470). S474 bears the Phosphoserine mark. Positions 477 to 488 are enriched in basic and acidic residues; it reads RVGDLRMIDLHP. Coiled-coil stretches lie at residues 557 to 581 and 644 to 685; these read RETR…QSAL and TSLL…ELEI. At S809 the chain carries Phosphoserine. 2 disordered regions span residues 853-875 and 891-947; these read EETA…DVKS and SPVV…PVNG. Composition is skewed to polar residues over residues 891 to 909 and 927 to 947; these read SPVV…NPAQ and QEVT…PVNG. Residues 962–990 are a coiled coil; sequence SAKNRAVSIEKAEKKWEEKRQNLEHYNGK. Residues 1008–1221 form a disordered region; the sequence is PNLEMPPASS…LRPSGPPKWE (214 aa). S1032, S1035, S1038, and S1049 each carry phosphoserine. Pro residues predominate over residues 1049-1058; that stretch reads SPPPPPPPPR. Over residues 1151-1162 the composition is skewed to polar residues; it reads NPNSHAEQSRAN. Residues 1176–1194 are compositionally biased toward basic and acidic residues; sequence PKEKKNLEFYHEDVRKSDV. S1466 is subject to Phosphoserine. Residues 1469-1495 are a coiled coil; it reads FEECDEELERMLTEEKIEEEEEDENED. 3 disordered regions span residues 1482-1567, 1622-1664, and 1691-1946; these read EEKI…VDDQ, AKRF…RKST, and VDTS…KETS. Positions 1484–1495 are enriched in acidic residues; that stretch reads KIEEEEEDENED. Over residues 1498 to 1508 the composition is skewed to polar residues; the sequence is VRTSSQMSCEQ. Composition is skewed to basic and acidic residues over residues 1509 to 1518 and 1622 to 1644; these read VDSRSDRMGQ and AKRF…RRQE. A coiled-coil region spans residues 1659-1688; that stretch reads EIRKSTYRTLDSLEQTIKQLENTISEMSPR. The segment covering 1739 to 1759 has biased composition (polar residues); that stretch reads KGSSTTPQTSRMPVPMTSKNR. S1741 bears the Phosphoserine mark. The segment covering 1765–1777 has biased composition (basic and acidic residues); the sequence is KASKQSKLQDPRQ. Residues 1806 to 1825 show a composition bias toward low complexity; the sequence is ALSPSSGKSSSLPSASGDSS. Position 1843 is a phosphoserine (S1843). Residues 1851 to 1866 show a composition bias toward polar residues; sequence HSASLIPSVSNGSLKF. Positions 1890-1899 are enriched in low complexity; the sequence is AAPTTSSSSS. S1899, S1902, and S1905 each carry phosphoserine. Positions 1920–1946 are enriched in polar residues; that stretch reads HTPSLASYKAQNGSSSKATPSTAKETS.

As to quaternary structure, interacts with CPNE4 (via VWFA domain). Expressed predominantly in the notochord and mesonephros during embryogenesis as well as in other areas such as the epithalamus sulcus, lens vesicle, inner retinal layer, heart, hepatic primordial surface, infundibulum, surface ectoderm, hind gut and limb bud mesenchyme. In adults, expressed in a range of tissues including the nucleus pulposus, corpus callosum, kidney, cardiac muscle, Sertoli cells and hair follicles.

It localises to the cytoplasm. The protein localises to the cytoskeleton. The protein resides in the microtubule organizing center. Its subcellular location is the centrosome. In terms of biological role, required for normal development of intervertebral disks. The polypeptide is Sickle tail protein (Mus musculus (Mouse)).